The chain runs to 1041 residues: RAS protein activator like-3 (1041 aa).

A disordered region spans residues 1–59 (MKPECGQTMFRTFWSRSRDSSAMDPPLQSEEDSQTQPSLPSPLTSYRWHTGGSGEKAAG). The segment covering 34–44 (QTQPSLPSPLT) has biased composition (polar residues). Phosphoserine occurs at positions 41, 74, 187, 189, 190, 193, 239, 252, 256, and 259. The stretch at 218–243 (SNQVHNVRKLLKRLKEKKRAKSELGA) forms a coiled coil. The PH domain maps to 220–321 (QVHNVRKLLK…WIEDLRRQFQ (102 aa)). The tract at residues 234 to 256 (KKRAKSELGAYTPRDGPPSALGS) is disordered. At threonine 262 the chain carries Phosphothreonine. The C2 domain occupies 312-430 (WIEDLRRQFQ…APAAGLERWF (119 aa)). The 209-residue stretch at 500 to 708 (GRAQALVTDL…PAMQHFLDQV (209 aa)) folds into the Ras-GAP domain. A disordered region spans residues 790–910 (GEKPGFLAPR…PGDRYQTTGT (121 aa)). 2 positions are modified to phosphoserine: serine 813 and serine 816. Residues 850 to 866 (RPTHRRPSAGSKPRPKG) show a composition bias toward basic residues. Residues 931 to 1013 (QKALSLLVES…LRDSLQSLQL (83 aa)) are a coiled coil. The disordered stretch occupies residues 1016–1041 (KTPGSRSQPLPLKAPCVNGADLSMGT).

Predominantly expressed in hematopoietic tissues.

It is found in the cytoplasm. Its subcellular location is the cell cortex. Its function is as follows. Functions as a Ras GTPase-activating protein. Plays an important role in the expansion and functions of natural killer T (NKT) cells in the liver by negatively regulating RAS activity and the down-stream ERK signaling pathway. This is RAS protein activator like-3 (Rasal3) from Mus musculus (Mouse).